The sequence spans 30 residues: GIPCAESCVYIPCTVTALLGCSCSDKVCYN.

The cyclopeptide (Gly-Asn) cross-link spans 1 to 30 (GIPCAESCVYIPCTVTALLGCSCSDKVCYN). 3 disulfides stabilise this stretch: C4–C21, C8–C23, and C13–C28.

Post-translationally, this is a cyclic peptide. In terms of tissue distribution, detected in stems (at protein level).

Probably participates in a plant defense mechanism. Has cytotoxic activity against HUVEC cells (LC(50)= 2.26 uM) and various cancer cells including HeLa (LC(50)= 3.48 uM), MCF-7 and K562. Displays very weak hemolytic activity. Binds to and induces leakage in phospholipd membranes, particularly ones containing 1-palmitoyl-2-oleophosphatidylethanolamine (POPE). The sequence is that of Cyclotide hyen-L from Pigea enneasperma (Spade flower).